The primary structure comprises 833 residues: Copper-exporting P-type ATPase (833 aa).

HMA domains follow at residues 3–64 (QTID…YGAT) and 98–161 (ESQQ…YGAE). Cu(+) is bound by residues C14, C17, C109, and C112. 6 consecutive transmembrane segments (helical) span residues 186-206 (WQAI…MIGD), 217-237 (LWLA…GHFY), 253-273 (TLVA…NLWP), 283-303 (LYYE…MLEA), 437-457 (AVFV…WYFF), and 463-483 (IVYT…CALG). The 4-aspartylphosphate intermediate role is filled by D522. The Mg(2+) site is built by D719 and D723. The next 2 helical transmembrane spans lie at 778 to 798 (LGAF…LWPF) and 800 to 820 (GTLL…ITVV).

The protein belongs to the cation transport ATPase (P-type) (TC 3.A.3) family. Type IB subfamily.

It is found in the cell inner membrane. The protein resides in the cytoplasm. The enzyme catalyses Cu(+)(in) + ATP + H2O = Cu(+)(out) + ADP + phosphate + H(+). Its function is as follows. Involved in Cu(+) export. Essential for copper tolerance under both aerobic and anaerobic conditions. Functionally, probably also encodes a cytoplasmic copper chaperone CopA(Z) that is produced by programmed ribosomal frameshifting. This Salmonella typhimurium (strain LT2 / SGSC1412 / ATCC 700720) protein is Copper-exporting P-type ATPase (copA).